We begin with the raw amino-acid sequence, 1088 residues long: Adenylate-forming reductase Nps10 (1088 aa).

Residues 1–22 form a disordered region; sequence MSSVSIQIPLPTPPPTQAHNSQ. The segment at 38–451 is adenylation (A) domain; it reads FDWHSKNSPN…KIFGRTDDQI (414 aa). Residues His261, 357–358, Thr362, and 443–446 contribute to the AMP site; these read NL and IFGR. Positions 586–668 constitute a Carrier domain; it reads AWDSAKTLGF…SLASFVSSVA (83 aa). An O-(pantetheine 4'-phosphoryl)serine modification is found at Ser621. The interval 712–951 is reductase (R) domain; that stretch reads LTGSTGALGS…IPVNVAAAAI (240 aa). Residues 716-719, 804-806, Tyr875, and Lys879 each bind NADP(+); these read TGAL and NAW.

The protein belongs to the adenylate-forming reductase family.

Adenylate-forming reductase, a natural product biosynthesis enzyme that resembles non-ribosomal peptide synthetases, yet serves to modify one substrate, rather than to condense two or more building blocks. The A-domain preferentially accepts phenylpyruvic acid and benzoic acid as substrate. The natural product of the enzyme is not yet known. This chain is Adenylate-forming reductase Nps10, found in Heterobasidion annosum (Root rot fungus).